A 232-amino-acid chain; its full sequence is Thrombin-like enzyme bothrombin (232 aa).

The Peptidase S1 domain occupies 1-223 (VIGGDECDIN…YLPWIQSIIA (223 aa)). Intrachain disulfides connect cysteine 7–cysteine 139, cysteine 26–cysteine 42, cysteine 74–cysteine 230, cysteine 118–cysteine 184, cysteine 150–cysteine 163, and cysteine 174–cysteine 199. Active-site charge relay system residues include histidine 41 and aspartate 86. Residues asparagine 98 and asparagine 146 are each glycosylated (N-linked (GlcNAc...) asparagine). Serine 178 serves as the catalytic Charge relay system. The N-linked (GlcNAc...) asparagine glycan is linked to asparagine 225.

It belongs to the peptidase S1 family. Snake venom subfamily. As to quaternary structure, monomer. In terms of tissue distribution, expressed by the venom gland.

It localises to the secreted. The catalysed reaction is Selective cleavage of Arg-|-Xaa bond in fibrinogen, to form fibrin, and release fibrinopeptide A. The specificity of further degradation of fibrinogen varies with species origin of the enzyme.. With respect to regulation, inhibited by diisopropylfluorophosphate (DFP), but not by hirudin. Thrombin-like snake venom serine protease that clots fibrinogen by releasing fibrinopeptide A from the alpha chain of fibrinogen (FGA), induces platelet aggregation through its interaction with GPIb (GP1BA/GP1BB), and activates factor VIII (F8). This is Thrombin-like enzyme bothrombin from Bothrops jararaca (Jararaca).